The sequence spans 75 residues: Tautomerase PptA (75 aa).

Pro2 (proton acceptor; via imino nitrogen) is an active-site residue.

The protein belongs to the 4-oxalocrotonate tautomerase family. PptA subfamily. Homodimer.

The protein resides in the cytoplasm. This is Tautomerase PptA from Shigella sonnei (strain Ss046).